A 430-amino-acid chain; its full sequence is Adenylosuccinate synthetase (430 aa).

GTP-binding positions include 12 to 18 (GDEGKGK) and 40 to 42 (GHT). Residue D13 is the Proton acceptor of the active site. Mg(2+)-binding residues include D13 and G40. IMP-binding positions include 13–16 (DEGK), 38–41 (NAGH), T128, R142, Q223, T238, and R302. Catalysis depends on H41, which acts as the Proton donor. 298–304 (TTTGRPR) contributes to the substrate binding site. Residues R304, 330–332 (LLD), and 412–414 (SVG) contribute to the GTP site.

This sequence belongs to the adenylosuccinate synthetase family. Homodimer. The cofactor is Mg(2+).

It localises to the cytoplasm. The enzyme catalyses IMP + L-aspartate + GTP = N(6)-(1,2-dicarboxyethyl)-AMP + GDP + phosphate + 2 H(+). Its pathway is purine metabolism; AMP biosynthesis via de novo pathway; AMP from IMP: step 1/2. Plays an important role in the de novo pathway of purine nucleotide biosynthesis. Catalyzes the first committed step in the biosynthesis of AMP from IMP. This Listeria innocua serovar 6a (strain ATCC BAA-680 / CLIP 11262) protein is Adenylosuccinate synthetase.